The following is a 380-amino-acid chain: MFLKAVVLSLALVAVTGAEAEVNADQVATVIWDYFSQLGNNAKKAVEHIQKSELTQQLNTLFQDKLGEVSTYTDDLQKKLVPFATELHERLTKDSEKLKEEIRKELEDLRARLLPHATEVSQKIGDNVRELQQRLGPYAEELRTQVDTQAQQLRRQLTPYVERMEKVMRQNLDQLQASLAPYAEELQATVNQRVEELKGRLTPYADQLQTKIEENVEELRRSLAPYAQDVQGKLNHQLEGLAFQMKKHAEELKAKISAKAEELRQGLVPLVNSVHGSQLGNAEDLQKSLAELSSRLDQQVEDFRRTVGPYGETFNKAMVQQLDTLRQKLGPLAGDVEDHLSFLEKDLRDKVSSFFNTLKEKESQAPALPAQEEMPVPLGG.

The first 20 residues, 1–20, serve as a signal peptide directing secretion; it reads MFLKAVVLSLALVAVTGAEA. 13 tandem repeats follow at residues 33-54, 60-81, 82-103, 115-136, 137-158, 159-180, 181-202, 203-224, 225-246, 247-268, 269-286, 287-308, and 309-330. Residues 33–330 form a 13 X 22 AA approximate tandem repeats region; the sequence is DYFSQLGNNA…QLDTLRQKLG (298 aa). The disordered stretch occupies residues 361-380; sequence KESQAPALPAQEEMPVPLGG.

The protein belongs to the apolipoprotein A1/A4/E family. As to quaternary structure, homodimer. In terms of tissue distribution, secreted in plasma.

The protein localises to the secreted. Functionally, may have a role in chylomicrons and VLDL secretion and catabolism. Required for efficient activation of lipoprotein lipase by ApoC-II; potent activator of LCAT. Apoa-IV is a major component of HDL and chylomicrons. The chain is Apolipoprotein A-IV (APOA4) from Bos taurus (Bovine).